Reading from the N-terminus, the 75-residue chain is Protein TM_1420 (75 aa).

Residues C6, C11, C39, and C43 each contribute to the [2Fe-2S] cluster site.

[2Fe-2S] cluster serves as cofactor.

Might be part of a multi-protein complex, possibly involved in metal cluster assembly. The sequence is that of Protein TM_1420 from Thermotoga maritima (strain ATCC 43589 / DSM 3109 / JCM 10099 / NBRC 100826 / MSB8).